Here is a 216-residue protein sequence, read N- to C-terminus: Large ribosomal subunit protein uL3 (216 aa).

Positions 132-157 are disordered; the sequence is FRGQGASHGTQAVHRKPGSIGGCATP.

The protein belongs to the universal ribosomal protein uL3 family. As to quaternary structure, part of the 50S ribosomal subunit. Forms a cluster with proteins L14 and L19.

In terms of biological role, one of the primary rRNA binding proteins, it binds directly near the 3'-end of the 23S rRNA, where it nucleates assembly of the 50S subunit. The polypeptide is Large ribosomal subunit protein uL3 (Saccharopolyspora erythraea (strain ATCC 11635 / DSM 40517 / JCM 4748 / NBRC 13426 / NCIMB 8594 / NRRL 2338)).